The following is a 523-amino-acid chain: Volkensin (523 aa).

Active-site residues include Tyr74, Tyr113, Glu162, and Arg165. AMP is bound at residue 111–113; the sequence is GGY. 2 disulfide bridges follow: Cys245-Cys269 and Cys285-Cys304. Positions 251 to 265 are cleaved as a propeptide — linker peptide; sequence QSDSPLVIRSFVDRN. The region spanning 270 to 397 is the Ricin B-type lectin 1 domain; the sequence is PSGETTAFIV…YAASQAWRVT (128 aa). A carbohydrate-binding positions include 287–291, Gln300, Lys305, and Asn311; that span reads DVKVE. Cys328 and Cys343 are oxidised to a cystine. A carbohydrate-binding residues include Asn358 and Asn398. 2 N-linked (GlcNAc...) asparagine glycosylation sites follow: Asn358 and Asn398. Residues 400-523 form the Ricin B-type lectin 2 domain; sequence TVPTVTTIVG…HGNSNQQWFL (124 aa). Cystine bridges form between Cys414–Cys427 and Cys453–Cys471.

It in the N-terminal section; belongs to the ribosome-inactivating protein family. Type 2 RIP subfamily. As to quaternary structure, disulfide-linked dimer of A and B chains. Post-translationally, N-glycosylated. Contains mannose and galactose. Expressed in roots (at protein level). Expressed in seeds (at protein level).

The catalysed reaction is Endohydrolysis of the N-glycosidic bond at one specific adenosine on the 28S rRNA.. Its activity is regulated as follows. Hemagglutinating activity is inhibited by galactose and structurally related sugars. Its function is as follows. Has N-glycosidase activity and is responsible for inhibiting protein synthesis through the catalytic inactivation of 60S ribosomal subunits by removing a specific adenine of 28S rRNA. Inhibits GTP-dependent binding of EF2 (elongation factor 2) to ribosomes. Functionally, binds to cell receptors and probably facilitates the entry into the cell of the A chain. Also acts as a galactose-specific lectin responsible for cell agglutination. This chain is Volkensin, found in Adenia volkensii (Kilyambiti plant).